The primary structure comprises 293 residues: Ankyrin repeat and SOCS box protein 11 (293 aa).

ANK repeat units lie at residues Asp36–Met65, Asp69–Ala98, Asp102–Pro131, Leu134–Met163, Ser167–Cys196, Gly199–Ser228, and Glu232–Gln259. Residues Ser244–His293 form the SOCS box domain.

Belongs to the ankyrin SOCS box (ASB) family. Substrate-recognition component of the ECS(ASB11) complex, composed of asb11, cul5, elob, eloc and rnf7/rbx2. In terms of tissue distribution, expressed in the developing nervous system: localizes to neural plate margins and is abutting the proneuronal zone.

The protein resides in the endoplasmic reticulum. The protein operates within protein modification; protein ubiquitination. Substrate-recognition component of a cullin-5-RING E3 ubiquitin-protein ligase complex (ECS complex, also named CRL5 complex), which mediates the ubiquitination and subsequent proteasomal degradation of target proteins. Acts as a regulator of the neuronal progenitor compartment size by maintaining the neural precursors in the proliferating undifferentiated state. The ECS(ASB11) complex acts as a positive regulator of Notch signaling pathway by mediating ubiquitination and degradation of DeltaA (dla). Also acts as a regulator of regenerative myogenesis. The protein is Ankyrin repeat and SOCS box protein 11 of Danio rerio (Zebrafish).